The sequence spans 431 residues: Glucose-1-phosphate adenylyltransferase (431 aa).

K39 lines the beta-D-fructose 1,6-bisphosphate pocket. AMP contacts are provided by R40, H46, and R52. Y114 contributes to the alpha-D-glucose 1-phosphate binding site. R130 is a binding site for AMP. Residues G179, 194-195 (EK), and S212 each bind alpha-D-glucose 1-phosphate. 2 residues coordinate AMP: E370 and R386. Beta-D-fructose 1,6-bisphosphate is bound by residues 419-423 (REMLR) and 429-431 (QER).

Belongs to the bacterial/plant glucose-1-phosphate adenylyltransferase family. Homotetramer.

The enzyme catalyses alpha-D-glucose 1-phosphate + ATP + H(+) = ADP-alpha-D-glucose + diphosphate. It functions in the pathway glycan biosynthesis; glycogen biosynthesis. Allosterically activated by fructose-1,6-bisphosphate (F16BP) and inhibited by AMP. Its function is as follows. Involved in the biosynthesis of ADP-glucose, a building block required for the elongation reactions to produce glycogen. Catalyzes the reaction between ATP and alpha-D-glucose 1-phosphate (G1P) to produce pyrophosphate and ADP-Glc. The chain is Glucose-1-phosphate adenylyltransferase from Salmonella arizonae (strain ATCC BAA-731 / CDC346-86 / RSK2980).